The following is a 129-amino-acid chain: Large-conductance mechanosensitive channel (129 aa).

3 consecutive transmembrane segments (helical) span residues 8–28 (FAFR…AAFS), 30–50 (IIKS…IGGI), and 67–87 (GQFL…FLFV).

Belongs to the MscL family. As to quaternary structure, homopentamer.

It localises to the cell membrane. Functionally, channel that opens in response to stretch forces in the membrane lipid bilayer. May participate in the regulation of osmotic pressure changes within the cell. This chain is Large-conductance mechanosensitive channel, found in Exiguobacterium sibiricum (strain DSM 17290 / CCUG 55495 / CIP 109462 / JCM 13490 / 255-15).